The sequence spans 996 residues: Alanine--tRNA ligase, chloroplastic/mitochondrial (996 aa).

4 residues coordinate Zn(2+): His-677, His-681, Cys-779, and His-783.

The protein belongs to the class-II aminoacyl-tRNA synthetase family. In terms of assembly, monomer. It depends on Zn(2+) as a cofactor.

It is found in the plastid. The protein localises to the chloroplast. Its subcellular location is the mitochondrion. The catalysed reaction is tRNA(Ala) + L-alanine + ATP = L-alanyl-tRNA(Ala) + AMP + diphosphate. Catalyzes the attachment of alanine to tRNA(Ala) in a two-step reaction: alanine is first activated by ATP to form Ala-AMP and then transferred to the acceptor end of tRNA(Ala). Also edits incorrectly charged tRNA(Ala) via its editing domain. This chain is Alanine--tRNA ligase, chloroplastic/mitochondrial, found in Oryza sativa subsp. japonica (Rice).